The sequence spans 157 residues: MRCPYCGSEDSQVKDSRPAEDGNAIRRRRICPDCGGRFTTFERVQLRELMIIKKTGRKVPFDRDKLLRSFEIALRKRPVDRDRIERAVSGIVRRLESSGETEIPSEEIGLQVLEALKSLDDVAFVRYASVYRDFSHAEDFEKVIAEISAKIARDPGE.

The segment at 1-21 is disordered; the sequence is MRCPYCGSEDSQVKDSRPAED. The segment at 3 to 34 is a zinc-finger region; sequence CPYCGSEDSQVKDSRPAEDGNAIRRRRICPDC. Over residues 11–21 the composition is skewed to basic and acidic residues; that stretch reads SQVKDSRPAED. In terms of domain architecture, ATP-cone spans 49-139; that stretch reads LMIIKKTGRK…VYRDFSHAED (91 aa).

It belongs to the NrdR family. It depends on Zn(2+) as a cofactor.

In terms of biological role, negatively regulates transcription of bacterial ribonucleotide reductase nrd genes and operons by binding to NrdR-boxes. The chain is Transcriptional repressor NrdR from Sinorhizobium medicae (strain WSM419) (Ensifer medicae).